The following is a 1357-amino-acid chain: DNA-directed RNA polymerase subunit beta (1357 aa).

This sequence belongs to the RNA polymerase beta chain family. The RNAP catalytic core consists of 2 alpha, 1 beta, 1 beta' and 1 omega subunit. When a sigma factor is associated with the core the holoenzyme is formed, which can initiate transcription.

It carries out the reaction RNA(n) + a ribonucleoside 5'-triphosphate = RNA(n+1) + diphosphate. DNA-dependent RNA polymerase catalyzes the transcription of DNA into RNA using the four ribonucleoside triphosphates as substrates. This Neorickettsia sennetsu (Ehrlichia sennetsu) protein is DNA-directed RNA polymerase subunit beta.